The chain runs to 366 residues: D-alanine--D-alanine ligase (366 aa).

One can recognise an ATP-grasp domain in the interval 140-346 (KALFAQSDLP…YGELLSRLVD (207 aa)). 173 to 228 (EDRLGYPCFVKPANMGSSVGISKATNRAELVAAFDDAVRYDRKLIVEKGINVREIE) is an ATP binding site. Mg(2+)-binding residues include Asp299, Glu313, and Asn315.

Belongs to the D-alanine--D-alanine ligase family. It depends on Mg(2+) as a cofactor. Requires Mn(2+) as cofactor.

It localises to the cytoplasm. The catalysed reaction is 2 D-alanine + ATP = D-alanyl-D-alanine + ADP + phosphate + H(+). It participates in cell wall biogenesis; peptidoglycan biosynthesis. Functionally, cell wall formation. This Heliobacterium modesticaldum (strain ATCC 51547 / Ice1) protein is D-alanine--D-alanine ligase.